We begin with the raw amino-acid sequence, 67 residues long: Small ribosomal subunit protein bS21 (67 aa).

This sequence belongs to the bacterial ribosomal protein bS21 family.

This chain is Small ribosomal subunit protein bS21, found in Magnetococcus marinus (strain ATCC BAA-1437 / JCM 17883 / MC-1).